We begin with the raw amino-acid sequence, 492 residues long: MSDLTKLTLAGARDALKKKEITSTELTGAYLKEMEAAAALNAYVTVTADKAMEMAKASDAKLAKGEGGALEGLPLGIKDLYCTKDVLTTACSHILDGFKPAYESTVTSNLWRDGAVMLGKLNNDEFAMGSSNETSHYGSVVNPWRRKGSDAKLVPGGSSGGSSAAVAANLCLAATATDTGGSIRQPAAFTGTVGLKPTYGRCSRWGIVAFASSLDQAGPIGRDVRDTAIMLGSMAGHDEKDTTSVDRAVPDYEAVLGQSIKGLSVGIPKEYRVDGMPGEIDELWSRGIEWLKAAGATVKEVSLPHTKYALPTYYIVAPAECSSNLARYDGVRYGLRVDGRDITDMYEKTRAAGFGAEVRRRVLMGTYVLSAGYYDAYYLKAQKVRSLIAQDFASAFSEVDVLLTPTAPSAAFAIGEKSDDPLSMYLNDVFTVPVNLAGLPGISVPAGLSGEGLPLGLQLIGRTFDEETLLKAAYAIEQAADFKAAPEAWWKA.

Active-site charge relay system residues include lysine 78 and serine 158. The active-site Acyl-ester intermediate is serine 182.

The protein belongs to the amidase family. GatA subfamily. In terms of assembly, heterotrimer of A, B and C subunits.

The enzyme catalyses L-glutamyl-tRNA(Gln) + L-glutamine + ATP + H2O = L-glutaminyl-tRNA(Gln) + L-glutamate + ADP + phosphate + H(+). Allows the formation of correctly charged Gln-tRNA(Gln) through the transamidation of misacylated Glu-tRNA(Gln) in organisms which lack glutaminyl-tRNA synthetase. The reaction takes place in the presence of glutamine and ATP through an activated gamma-phospho-Glu-tRNA(Gln). The polypeptide is Glutamyl-tRNA(Gln) amidotransferase subunit A (Parvibaculum lavamentivorans (strain DS-1 / DSM 13023 / NCIMB 13966)).